An 893-amino-acid polypeptide reads, in one-letter code: POU domain protein 2, isoform B (893 aa).

A disordered region spans residues 586–668; the sequence is QMKQQQREDP…STPKPTSGLT (83 aa). Low complexity predominate over residues 602-617; it reads PLAKSPLRSPSLSPVP. A compositionally biased stretch (polar residues) spans 623–646; the sequence is QQRTPPNSMTANSLGMSSAVMTPN. Residues 647 to 665 show a composition bias toward low complexity; sequence TPSMQQQPQLQQSTPKPTS. Residues 681 to 755 enclose the POU-specific domain; that stretch reads EETTDLEELE…LLQKWLEDAD (75 aa). Positions 786–845 form a DNA-binding region, homeobox; it reads RRKKRTSIETTVRTTLEKAFLMNCKPTSEEISQLSERLNMDKEVIRVWFCNRRQKEKRIN.

This sequence belongs to the POU transcription factor family. Class-2 subfamily. Initial expression in cellular blastoderm stage, then in ectodermal stripes during germband extension. Broad expression in the neuroectoderm followed by limitation to discrete subsets of CNS cells, and expression in specific PNS neurons and support cells.

The protein resides in the nucleus. Functionally, DNA-binding regulatory protein implicated in early development. Involved in neuronal cell fate decision. May act as an octamer-dependent activator of transcription. Could also play an early role in specific ectodermal cells, and a subsequent role in the embryonic nervous system. This Drosophila melanogaster (Fruit fly) protein is POU domain protein 2, isoform B.